The primary structure comprises 347 residues: MNISMGISSLSVINGSALPRHNWAREEAQALYDLPFPDLVFQAQSIHRTSFDPNHVETASLLSIKTGGCAEDCGYCSQSAHYKTDVKATKLMAHDDVVATARRAKESGAGRFCMAAAWRNPKEKDLERICHMVSAVKELGMETCATLGMLTREQADKLRAAGLDFYNHNVDTSPEFYGKIITTRTLQDRIETLAHARESGLKVCCGGIVGLGEQVEDRLGMLVLLANLAEHPESVPINQWNEVKGVPVNATAEAPDPIAFVRMIAVARIMMPKSVVRLSAGRQYMSDEMQALCMLAGANSIFIGDVLLTTKNPQTTKDAALLERLGMTSRFDEVATDKANPVSSRAI.

The Radical SAM core domain occupies 54-273 (NHVETASLLS…IAVARIMMPK (220 aa)). Residues Cys-69, Cys-73, and Cys-76 each coordinate [4Fe-4S] cluster. Positions 113, 144, 204, and 277 each coordinate [2Fe-2S] cluster.

The protein belongs to the radical SAM superfamily. Biotin synthase family. As to quaternary structure, homodimer. [4Fe-4S] cluster is required as a cofactor. It depends on [2Fe-2S] cluster as a cofactor.

The enzyme catalyses (4R,5S)-dethiobiotin + (sulfur carrier)-SH + 2 reduced [2Fe-2S]-[ferredoxin] + 2 S-adenosyl-L-methionine = (sulfur carrier)-H + biotin + 2 5'-deoxyadenosine + 2 L-methionine + 2 oxidized [2Fe-2S]-[ferredoxin]. It participates in cofactor biosynthesis; biotin biosynthesis; biotin from 7,8-diaminononanoate: step 2/2. In terms of biological role, catalyzes the conversion of dethiobiotin (DTB) to biotin by the insertion of a sulfur atom into dethiobiotin via a radical-based mechanism. The protein is Biotin synthase of Afipia carboxidovorans (strain ATCC 49405 / DSM 1227 / KCTC 32145 / OM5) (Oligotropha carboxidovorans).